A 176-amino-acid polypeptide reads, in one-letter code: Ribosome maturation factor RimM (176 aa).

The 80-residue stretch at 97-176 folds into the PRC barrel domain; that stretch reads EDEFYWRDLI…QILVDWDPDF (80 aa).

This sequence belongs to the RimM family. In terms of assembly, binds ribosomal protein uS19.

It localises to the cytoplasm. Functionally, an accessory protein needed during the final step in the assembly of 30S ribosomal subunit, possibly for assembly of the head region. Essential for efficient processing of 16S rRNA. May be needed both before and after RbfA during the maturation of 16S rRNA. It has affinity for free ribosomal 30S subunits but not for 70S ribosomes. In Shewanella sp. (strain MR-4), this protein is Ribosome maturation factor RimM.